Reading from the N-terminus, the 249-residue chain is 4-hydroxy-tetrahydrodipicolinate reductase (249 aa).

NAD(+) contacts are provided by residues Asp32, 74 to 76 (GTT), and 99 to 102 (SANF). His134 (proton donor/acceptor) is an active-site residue. His135 lines the (S)-2,3,4,5-tetrahydrodipicolinate pocket. The Proton donor role is filled by Lys138. 144-145 (GT) is a binding site for (S)-2,3,4,5-tetrahydrodipicolinate.

This sequence belongs to the DapB family.

It localises to the cytoplasm. It catalyses the reaction (S)-2,3,4,5-tetrahydrodipicolinate + NAD(+) + H2O = (2S,4S)-4-hydroxy-2,3,4,5-tetrahydrodipicolinate + NADH + H(+). The catalysed reaction is (S)-2,3,4,5-tetrahydrodipicolinate + NADP(+) + H2O = (2S,4S)-4-hydroxy-2,3,4,5-tetrahydrodipicolinate + NADPH + H(+). It participates in amino-acid biosynthesis; L-lysine biosynthesis via DAP pathway; (S)-tetrahydrodipicolinate from L-aspartate: step 4/4. Functionally, catalyzes the conversion of 4-hydroxy-tetrahydrodipicolinate (HTPA) to tetrahydrodipicolinate. This chain is 4-hydroxy-tetrahydrodipicolinate reductase, found in Chlorobaculum parvum (strain DSM 263 / NCIMB 8327) (Chlorobium vibrioforme subsp. thiosulfatophilum).